Here is a 94-residue protein sequence, read N- to C-terminus: Putative pterin-4-alpha-carbinolamine dehydratase (94 aa).

This sequence belongs to the pterin-4-alpha-carbinolamine dehydratase family.

The catalysed reaction is (4aS,6R)-4a-hydroxy-L-erythro-5,6,7,8-tetrahydrobiopterin = (6R)-L-erythro-6,7-dihydrobiopterin + H2O. The chain is Putative pterin-4-alpha-carbinolamine dehydratase from Mycobacteroides abscessus (strain ATCC 19977 / DSM 44196 / CCUG 20993 / CIP 104536 / JCM 13569 / NCTC 13031 / TMC 1543 / L948) (Mycobacterium abscessus).